The sequence spans 168 residues: N-alpha-acetyltransferase (168 aa).

Residues 13–168 enclose the N-acetyltransferase domain; that stretch reads YQIRLATLSD…EDAYLMAAPL (156 aa). Y38 is a substrate binding site. Zn(2+) is bound at residue H89. Acetyl-CoA is bound by residues 93–95 and 101–106; these read IAV and KIGVGT. CoA contacts are provided by residues 93–95 and 101–106; these read IAV and KIGVGT. E128 is a binding site for Zn(2+). Residues N133 and 140–142 contribute to the acetyl-CoA site; that span reads YKK. CoA is bound at residue N133. Position 155 (Y155) interacts with substrate.

Belongs to the acetyltransferase family. ARD1 subfamily. In terms of assembly, homodimer.

The protein resides in the cytoplasm. It carries out the reaction N-terminal L-alanyl-[protein] + acetyl-CoA = N-terminal N(alpha)-acetyl-L-alanyl-[protein] + CoA + H(+). It catalyses the reaction N-terminal L-seryl-[protein] + acetyl-CoA = N-terminal N(alpha)-acetyl-L-seryl-[protein] + CoA + H(+). The catalysed reaction is N-terminal L-methionyl-L-leucyl-[protein] + acetyl-CoA = N-terminal N(alpha)-acetyl-L-methionyl-L-leucyl-[protein] + CoA + H(+). The enzyme catalyses N-terminal L-methionyl-L-glutamyl-[protein] + acetyl-CoA = N-terminal N(alpha)-acetyl-L-methionyl-L-glutamyl-[protein] + CoA + H(+). Its function is as follows. Displays alpha (N-terminal) acetyltransferase activity. Catalyzes the covalent attachment of an acetyl moiety from acetyl-CoA to the free alpha-amino group at the N-terminus of a protein. This Sulfolobus acidocaldarius (strain ATCC 33909 / DSM 639 / JCM 8929 / NBRC 15157 / NCIMB 11770) protein is N-alpha-acetyltransferase.